The sequence spans 305 residues: MKHLLTLMEFAPHEVEYLLRVSREFKTRFLAGEIYTPLFPGRVLILYFEKHSTRTRLSLTSAAAQLGIQAVYTTPNELQIARGETVADTMRVISRYAAAVAARVYKHETLEEMARHSAIPVINALSDKHHPLQALADALTLWERAGRLHNVKIAFVGDVSNNVATSLAIIGAKLGWEVRLVGPKQLWNQRLVDELAEDAAKTGARIYFTDSINEVAGVDGVYTDVWVSMGFEKEAEERRRLLKPYQVNQRVMEIAGKKAVFLHCLPAHRGEEVTDDVIDGPQSAVWDQAENRMHTAKAVLAYLLK.

Residues 52–55, Q79, R103, and 130–133 each bind carbamoyl phosphate; these read STRT and HPLQ. Residues N162, D224, and 228-229 each bind L-ornithine; that span reads SM. Residues 264 to 265 and R292 each bind carbamoyl phosphate; that span reads CL.

This sequence belongs to the aspartate/ornithine carbamoyltransferase superfamily. OTCase family.

The protein resides in the cytoplasm. The catalysed reaction is carbamoyl phosphate + L-ornithine = L-citrulline + phosphate + H(+). Its pathway is amino-acid biosynthesis; L-arginine biosynthesis; L-arginine from L-ornithine and carbamoyl phosphate: step 1/3. Functionally, reversibly catalyzes the transfer of the carbamoyl group from carbamoyl phosphate (CP) to the N(epsilon) atom of ornithine (ORN) to produce L-citrulline. This Pyrobaculum aerophilum (strain ATCC 51768 / DSM 7523 / JCM 9630 / CIP 104966 / NBRC 100827 / IM2) protein is Ornithine carbamoyltransferase.